Reading from the N-terminus, the 293-residue chain is Protease HtpX (293 aa).

2 consecutive transmembrane segments (helical) span residues 4–24 (IALFLLTNLAVMVVFGLVLSL) and 34–54 (GLMIMALLFGFGGSFVSLLMS). His-139 contacts Zn(2+). Glu-140 is an active-site residue. His-143 serves as a coordination point for Zn(2+). Transmembrane regions (helical) follow at residues 158–178 (VVNTFVIFISRILAQLAAGFM) and 193–213 (LIYFAVATVLELVFGILASII). Glu-222 contributes to the Zn(2+) binding site.

Belongs to the peptidase M48B family. Requires Zn(2+) as cofactor.

The protein resides in the cell inner membrane. This is Protease HtpX from Escherichia coli O127:H6 (strain E2348/69 / EPEC).